Here is a 469-residue protein sequence, read N- to C-terminus: Programmed cell death protein 4 (469 aa).

An N-acetylmethionine modification is found at Met-1. Disordered stretches follow at residues 1-38 (MDVENEQILNVNPADPDNLSDSLFSGDEESAGTEEIKN) and 58-128 (KAKR…GTPG). The residue at position 25 (Ser-25) is a Phosphoserine. Residues 58 to 64 (KAKRRLR) carry the Nuclear localization signal motif. Position 67 is a phosphoserine; by PKB and RPS6KB1 (Ser-67). Residues Ser-68, Ser-71, Ser-76, and Ser-78 each carry the phosphoserine modification. A Phosphodegron motif is present at residues 70-76 (DSGRGDS). The span at 74 to 83 (GDSVSDNGSD) shows a compositional bias: low complexity. Residues 84-93 (TLRSGVTVPT) show a composition bias toward polar residues. Residue Ser-94 is modified to Phosphoserine. Positions 114–125 (KKGGAGGKGVWG) are enriched in gly residues. Position 152 is a phosphotyrosine (Tyr-152). The MI 1 domain maps to 163-284 (AFEKTLTPII…CNTYIDSYKG (122 aa)). Residues Ser-313 and Ser-317 each carry the phosphoserine modification. One can recognise an MI 2 domain in the interval 326–449 (HLVKEIDMLL…SKQLRDLCPS (124 aa)). Residues 448 to 454 (PSRGRKR) carry the Nuclear localization signal motif. Ser-457 is subject to Phosphoserine; by PKB.

This sequence belongs to the PDCD4 family. As to quaternary structure, interacts (via MI domains) with EIF4A2. Interacts (via MI domains) with EIF4A1 (via N-terminal domain). Heterotrimer with EIF4A1; one molecule of PDCD4 binds two molecules of EIF4A1. Interacts with EIF4G1. May form a complex with EIF4A1 and EIF4G1. The interaction between PDCD4 and EIF4A1 interferes with the interaction between EIF4A1 and EIF4G. When phosphorylated, interacts with BTRC and FBXW11. Post-translationally, polyubiquitinated, leading to its proteasomal degradation. Rapidly degraded in response to mitogens. Phosphorylation of the phosphodegron promotes interaction with BTRC and proteasomal degradation. Phosphorylated at Ser-67 by RPS6KB1 in response to mitogens; phosphorylation promotes proteasomal degradation of PDCD4.

It localises to the nucleus. It is found in the cytoplasm. In terms of biological role, inhibits translation initiation and cap-dependent translation. May excert its function by hindering the interaction between EIF4A1 and EIF4G. Inhibits the helicase activity of EIF4A. Modulates the activation of JUN kinase. Down-regulates the expression of MAP4K1, thus inhibiting events important in driving invasion, namely, MAPK85 activation and consequent JUN-dependent transcription. May play a role in apoptosis. Tumor suppressor. Inhibits tumor promoter-induced neoplastic transformation. Binds RNA. This Pongo abelii (Sumatran orangutan) protein is Programmed cell death protein 4 (PDCD4).